Here is a 420-residue protein sequence, read N- to C-terminus: Serine hydroxymethyltransferase (420 aa).

Residues Leu121 and 125 to 127 (GHL) contribute to the (6S)-5,6,7,8-tetrahydrofolate site. The residue at position 229 (Lys229) is an N6-(pyridoxal phosphate)lysine. 355–357 (SPF) is a (6S)-5,6,7,8-tetrahydrofolate binding site.

Belongs to the SHMT family. Homodimer. It depends on pyridoxal 5'-phosphate as a cofactor.

It localises to the cytoplasm. The catalysed reaction is (6R)-5,10-methylene-5,6,7,8-tetrahydrofolate + glycine + H2O = (6S)-5,6,7,8-tetrahydrofolate + L-serine. Its pathway is one-carbon metabolism; tetrahydrofolate interconversion. The protein operates within amino-acid biosynthesis; glycine biosynthesis; glycine from L-serine: step 1/1. In terms of biological role, catalyzes the reversible interconversion of serine and glycine with tetrahydrofolate (THF) serving as the one-carbon carrier. This reaction serves as the major source of one-carbon groups required for the biosynthesis of purines, thymidylate, methionine, and other important biomolecules. Also exhibits THF-independent aldolase activity toward beta-hydroxyamino acids, producing glycine and aldehydes, via a retro-aldol mechanism. The sequence is that of Serine hydroxymethyltransferase from Chromohalobacter salexigens (strain ATCC BAA-138 / DSM 3043 / CIP 106854 / NCIMB 13768 / 1H11).